The primary structure comprises 346 residues: Dimethyladenosine transferase 1, mitochondrial (346 aa).

The transit peptide at 1–27 (MAASGKLSTCRLPPLPTIREIIKLLRL) directs the protein to the mitochondrion. Leu38, Gly63, Glu85, Lys86, Asp111, Val112, and Asn141 together coordinate S-adenosyl-L-methionine.

This sequence belongs to the class I-like SAM-binding methyltransferase superfamily. rRNA adenine N(6)-methyltransferase family. KsgA subfamily. In terms of assembly, interacts with mitochondrial RNA polymerase POLRMT. Interacts with TFAM. Bound to the maturing mtSSU until the late stages of assembly. In terms of tissue distribution, ubiquitously expressed.

The protein resides in the mitochondrion. It catalyses the reaction adenosine(N)/adenosine(N+1) in rRNA + 4 S-adenosyl-L-methionine = N(6)-dimethyladenosine(N)/N(6)-dimethyladenosine(N+1) in rRNA + 4 S-adenosyl-L-homocysteine + 4 H(+). Functionally, mitochondrial methyltransferase which uses S-adenosyl methionine to dimethylate two highly conserved adjacent adenosine residues (A1583 and A1584) within the loop of helix 45 at the 3-prime end of 12S rRNA, thereby regulating the assembly or stability of the small subunit of the mitochondrial ribosome. Also required for basal transcription of mitochondrial DNA, probably via its interaction with POLRMT and TFAM. Stimulates transcription independently of the methyltransferase activity. The sequence is that of Dimethyladenosine transferase 1, mitochondrial from Homo sapiens (Human).